Here is a 197-residue protein sequence, read N- to C-terminus: A-type ATP synthase subunit E 2 (197 aa).

The protein belongs to the V-ATPase E subunit family. Has multiple subunits with at least A(3), B(3), C, D, E, F, H, I and proteolipid K(x).

Its subcellular location is the cell membrane. Functionally, component of the A-type ATP synthase that produces ATP from ADP in the presence of a proton gradient across the membrane. The protein is A-type ATP synthase subunit E 2 of Methanospirillum hungatei JF-1 (strain ATCC 27890 / DSM 864 / NBRC 100397 / JF-1).